We begin with the raw amino-acid sequence, 164 residues long: NADH-quinone oxidoreductase subunit B (164 aa).

[4Fe-4S] cluster-binding residues include cysteine 38, cysteine 39, cysteine 104, and cysteine 133.

Belongs to the complex I 20 kDa subunit family. NDH-1 is composed of 14 different subunits. Subunits NuoB, C, D, E, F, and G constitute the peripheral sector of the complex. It depends on [4Fe-4S] cluster as a cofactor.

The protein resides in the cell inner membrane. It catalyses the reaction a quinone + NADH + 5 H(+)(in) = a quinol + NAD(+) + 4 H(+)(out). In terms of biological role, NDH-1 shuttles electrons from NADH, via FMN and iron-sulfur (Fe-S) centers, to quinones in the respiratory chain. The immediate electron acceptor for the enzyme in this species is believed to be ubiquinone. Couples the redox reaction to proton translocation (for every two electrons transferred, four hydrogen ions are translocated across the cytoplasmic membrane), and thus conserves the redox energy in a proton gradient. The protein is NADH-quinone oxidoreductase subunit B of Protochlamydia amoebophila (strain UWE25).